A 365-amino-acid polypeptide reads, in one-letter code: Ribosomal RNA large subunit methyltransferase F (365 aa).

Residues 1–50 are disordered; that stretch reads MSKPAVKSVPSATAKTATRAVNIRQKVKAPKQAKPEAKGRAKPSKDKPRA. Basic and acidic residues predominate over residues 33-50; that stretch reads AKPEAKGRAKPSKDKPRA.

Belongs to the methyltransferase superfamily. METTL16/RlmF family.

The protein localises to the cytoplasm. It catalyses the reaction adenosine(1618) in 23S rRNA + S-adenosyl-L-methionine = N(6)-methyladenosine(1618) in 23S rRNA + S-adenosyl-L-homocysteine + H(+). Its function is as follows. Specifically methylates the adenine in position 1618 of 23S rRNA. In Shewanella baltica (strain OS155 / ATCC BAA-1091), this protein is Ribosomal RNA large subunit methyltransferase F.